The primary structure comprises 993 residues: Ephrin type-A receptor 7 (993 aa).

The first 27 residues, 1-27, serve as a signal peptide directing secretion; that stretch reads MVLRSRLPPWIMLCSVWLLRFAHTGEA. Residues 28–550 are Extracellular-facing; it reads QAAKEVILLD…TAVSSEQNPV (523 aa). Positions 32-210 constitute an Eph LBD domain; the sequence is EVILLDSKAQ…YYKKCWSIIE (179 aa). Fibronectin type-III domains are found at residues 331 to 441 and 442 to 537; these read PPSA…TGQA and APSQ…TLEE. N-linked (GlcNAc...) asparagine glycosylation is found at Asn343 and Asn410. The chain crosses the membrane as a helical span at residues 551-571; the sequence is IIIAVVAVAGTIILVFMVFGF. Over 572–993 the chain is Cytoplasmic; sequence IIGRRHCGYS…LHLHGTGIQV (422 aa). Phosphotyrosine; by autocatalysis occurs at positions 603 and 609. The region spanning 628 to 889 is the Protein kinase domain; sequence IKIERVIGAG…QIVGILDKMI (262 aa). ATP-binding positions include 634–642 and Lys660; that span reads IGAGEFGEV. Asp753 functions as the Proton acceptor in the catalytic mechanism. A phosphotyrosine; by autocatalysis mark is found at Tyr786 and Tyr935. In terms of domain architecture, SAM spans 918–982; that stretch reads TTFCSVGEWL…MSSIQTMRAQ (65 aa). The PDZ-binding signature appears at 991–993; sequence IQV.

It belongs to the protein kinase superfamily. Tyr protein kinase family. Ephrin receptor subfamily. In terms of assembly, heterotetramer upon binding of the ligand. The heterotetramer is composed of an ephrin dimer and a receptor dimer. Oligomerization is probably required to induce biological responses. Post-translationally, phosphorylated.

Its subcellular location is the cell membrane. The enzyme catalyses L-tyrosyl-[protein] + ATP = O-phospho-L-tyrosyl-[protein] + ADP + H(+). In terms of biological role, receptor tyrosine kinase which binds promiscuously GPI-anchored ephrin-A family ligands residing on adjacent cells, leading to contact-dependent bidirectional signaling into neighboring cells. The signaling pathway downstream of the receptor is referred to as forward signaling while the signaling pathway downstream of the ephrin ligand is referred to as reverse signaling. Among GPI-anchored ephrin-A ligands, EFNA5 is a cognate/functional ligand for EPHA7 and their interaction regulates brain development modulating cell-cell adhesion and repulsion. Has a repellent activity on axons and is for instance involved in the guidance of corticothalamic axons and in the proper topographic mapping of retinal axons to the colliculus. May also regulate brain development through a caspase(CASP3)-dependent proapoptotic activity. Forward signaling may result in activation of components of the ERK signaling pathway including MAP2K1, MAP2K2, MAPK1 and MAPK3 which are phosphorylated upon activation of EPHA7. This is Ephrin type-A receptor 7 (EPHA7) from Gallus gallus (Chicken).